A 621-amino-acid polypeptide reads, in one-letter code: ATP-dependent DNA helicase Q1 (621 aa).

Residues 100–275 (VNATMARKDI…QKILCVEKCL (176 aa)) enclose the Helicase ATP-binding domain. Residue 113 to 120 (MPTGGGKS) coordinates ATP. The DEVH box signature appears at 219 to 222 (DEVH). The Helicase C-terminal domain occupies 296-451 (SAEDFIENIA…EMVSYCQNIS (156 aa)). C453, C471, C475, and C478 together coordinate Zn(2+). N6-acetyllysine occurs at positions 514 and 522. A phosphoserine mark is found at S597 and S602.

This sequence belongs to the helicase family. RecQ subfamily. In terms of assembly, may form homodimers or higher order oligomers. Interacts with EXO1. Interacts with MLH1. Interacts with PARP1. Mg(2+) is required as a cofactor. Requires Mn(2+) as cofactor. Zn(2+) serves as cofactor.

It localises to the nucleus. It catalyses the reaction Couples ATP hydrolysis with the unwinding of duplex DNA by translocating in the 3'-5' direction.. The enzyme catalyses ATP + H2O = ADP + phosphate + H(+). The catalysed reaction is dATP + H2O = dADP + phosphate + H(+). DNA helicase that plays a role in DNA damage repair and genome stability. Exhibits a magnesium- and ATP-dependent DNA-helicase activity that unwinds single- and double-stranded DNA in a 3'-5' direction. Plays a role in restoring regressed replication forks. Required to restart stalled replication forks induced by abortive topoisomerase 1 and 2 lesions. May play a role in the repair of DNA that is damaged by ultraviolet light or other mutagens. The sequence is that of ATP-dependent DNA helicase Q1 (Recql) from Rattus norvegicus (Rat).